Here is a 179-residue protein sequence, read N- to C-terminus: Large ribosomal subunit protein uL5 (179 aa).

It belongs to the universal ribosomal protein uL5 family. Part of the 50S ribosomal subunit; part of the 5S rRNA/L5/L18/L25 subcomplex. Contacts the 5S rRNA and the P site tRNA. Forms a bridge to the 30S subunit in the 70S ribosome.

Its function is as follows. This is one of the proteins that bind and probably mediate the attachment of the 5S RNA into the large ribosomal subunit, where it forms part of the central protuberance. In the 70S ribosome it contacts protein S13 of the 30S subunit (bridge B1b), connecting the 2 subunits; this bridge is implicated in subunit movement. Contacts the P site tRNA; the 5S rRNA and some of its associated proteins might help stabilize positioning of ribosome-bound tRNAs. The protein is Large ribosomal subunit protein uL5 of Acidovorax ebreus (strain TPSY) (Diaphorobacter sp. (strain TPSY)).